Reading from the N-terminus, the 135-residue chain is Small ribosomal subunit protein uS11 (135 aa).

Belongs to the universal ribosomal protein uS11 family. Part of the 30S ribosomal subunit. Interacts with proteins S7 and S18. Binds to IF-3.

In terms of biological role, located on the platform of the 30S subunit, it bridges several disparate RNA helices of the 16S rRNA. Forms part of the Shine-Dalgarno cleft in the 70S ribosome. The polypeptide is Small ribosomal subunit protein uS11 (Polynucleobacter asymbioticus (strain DSM 18221 / CIP 109841 / QLW-P1DMWA-1) (Polynucleobacter necessarius subsp. asymbioticus)).